A 767-amino-acid polypeptide reads, in one-letter code: Photosystem I P700 chlorophyll a apoprotein A1 (767 aa).

8 helical membrane-spanning segments follow: residues 72–95 (IFSA…FHGA), 158–181 (LMAL…FHYH), 197–221 (LNHH…HVSA), 305–323 (IAHH…GHMY), 364–387 (WHAQ…QHMY), 403–429 (IGLF…IAMV), 451–473 (AIIS…LYIH), and 548–566 (FMVH…LILL). Residues C590 and C599 each contribute to the [4Fe-4S] cluster site. 2 consecutive transmembrane segments (helical) span residues 606 to 627 (HVFL…HFSW) and 681 to 703 (TAAY…MFLF). H692 is a binding site for chlorophyll a'. The chlorophyll a site is built by M700 and Y708. A phylloquinone-binding site is contributed by W709. Residues 741–761 (AVGVAHYLLGGIATTWAFFHA) traverse the membrane as a helical segment.

It belongs to the PsaA/PsaB family. The PsaA/B heterodimer binds the P700 chlorophyll special pair and subsequent electron acceptors. PSI consists of a core antenna complex that captures photons, and an electron transfer chain that converts photonic excitation into a charge separation. The cyanobacterial PSI reaction center is composed of one copy each of PsaA,B,C,D,E,F,I,J,K,L,M and X, and forms trimeric complexes. PSI electron transfer chain: 5 chlorophyll a, 1 chlorophyll a', 2 phylloquinones and 3 4Fe-4S clusters. PSI core antenna: 90 chlorophyll a, 22 carotenoids, 3 phospholipids and 1 galactolipid. P700 is a chlorophyll a/chlorophyll a' dimer, A0 is one or more chlorophyll a, A1 is one or both phylloquinones and FX is a shared 4Fe-4S iron-sulfur center. serves as cofactor.

It is found in the cellular thylakoid membrane. It carries out the reaction reduced [plastocyanin] + hnu + oxidized [2Fe-2S]-[ferredoxin] = oxidized [plastocyanin] + reduced [2Fe-2S]-[ferredoxin]. Functionally, psaA and PsaB bind P700, the primary electron donor of photosystem I (PSI), as well as the electron acceptors A0, A1 and FX. PSI is a plastocyanin/cytochrome c6-ferredoxin oxidoreductase, converting photonic excitation into a charge separation, which transfers an electron from the donor P700 chlorophyll pair to the spectroscopically characterized acceptors A0, A1, FX, FA and FB in turn. Oxidized P700 is reduced on the lumenal side of the thylakoid membrane by plastocyanin or cytochrome c6. This Synechococcus sp. (strain CC9605) protein is Photosystem I P700 chlorophyll a apoprotein A1.